A 253-amino-acid polypeptide reads, in one-letter code: Tryptophan synthase alpha chain (253 aa).

Catalysis depends on proton acceptor residues Glu46 and Asp57.

Belongs to the TrpA family. As to quaternary structure, tetramer of two alpha and two beta chains.

The enzyme catalyses (1S,2R)-1-C-(indol-3-yl)glycerol 3-phosphate + L-serine = D-glyceraldehyde 3-phosphate + L-tryptophan + H2O. It functions in the pathway amino-acid biosynthesis; L-tryptophan biosynthesis; L-tryptophan from chorismate: step 5/5. In terms of biological role, the alpha subunit is responsible for the aldol cleavage of indoleglycerol phosphate to indole and glyceraldehyde 3-phosphate. This is Tryptophan synthase alpha chain from Dictyoglomus thermophilum (strain ATCC 35947 / DSM 3960 / H-6-12).